The sequence spans 337 residues: HTH-type transcriptional regulator DegA (337 aa).

Positions 1-57 (MKTTIYDVAKAAGVSITTVSRVINNTGRISDKTRQKVMNVMNEMAYTPNVHAAALTG) constitute an HTH lacI-type domain. Residues 5-24 (IYDVAKAAGVSITTVSRVIN) constitute a DNA-binding region (H-T-H motif). The tract at residues 300–319 (AERHRTAGRSNRGKRKAKQK) is disordered.

Functionally, involved in the control of degradation of B.subtilis amidophosphoribosyltransferase (purF). Probably activates the gene for a degradative protease. The polypeptide is HTH-type transcriptional regulator DegA (degA) (Bacillus subtilis (strain 168)).